The primary structure comprises 678 residues: MADRRRRRRRAFQDSEEEEDEESGSESAGSGGQPAAPSRQESREPGTKRAEPPREGKESECESEDGIEGDAVLSDYESAESEEEEAHLSEEEPLKTTLKQENNVEEAPATREQKPKSKGAVTGERQSGDGQESTEPEENKTSKKSQKQLDDDEDRKNPAYIPRKGLFFEHDLRGHVNDEEVRPKGRHPRKLWKDEGRWEHDRFREDEQAPKSREELISIYGYDIRSSKNSEEIRPRRPRKPRFGSPTRREEISEKPSRPSNRYQDSGISQPLRPYTNRNAPPSNKVGPSRTYSRQGGYKENRSSYQSEEEAPPHPSERRQDYGGHRARSTEQGPAPPREFSPEADPIIKEEPVIEKQAAEPSPPPPDRPVEKKSYSRVRRSRIKVGDTGKSMEDTTVTELPPPPPVPPAVAAEFTPAPLNVKQGNWEPPSEGGMSGIEEELSQMNLSEQSWNPGQPAYISPRGIPNPMHMGGGPPQYNRMEGMAVQGGRVKRYSTQRQRPVPDPAAMHISLMESHYYDPLQFQGPIYAHGDSPSSMPPQGMIVQPEMHLSHPGIHPHQPPATISTPNLYPAPVSLPPGQPPPQQLLPPPYFTAPPNVMNFGNPTYPYPPGALPPPPAHLYPNAQAQSQVYGGVTYYNPVQQQVQPKPSPPRRTSQPVTIKPPPPEENRHVKMKEKSNS.

Positions 1–10 (MADRRRRRRR) are enriched in basic residues. 2 disordered regions span residues 1–412 (MADR…AVAA) and 637–678 (NPVQ…KSNS). Over residues 14-24 (DSEEEEDEESG) the composition is skewed to acidic residues. Positions 25 to 38 (SESAGSGGQPAAPS) are enriched in low complexity. Over residues 40-60 (QESREPGTKRAEPPREGKESE) the composition is skewed to basic and acidic residues. Polar residues predominate over residues 124 to 133 (ERQSGDGQES). 4 stretches are compositionally biased toward basic and acidic residues: residues 166-183 (LFFE…EVRP), 191-216 (LWKD…REEL), 225-235 (RSSKNSEEIRP), and 247-257 (TRREEISEKPS). Residues 258–269 (RPSNRYQDSGIS) show a composition bias toward polar residues. Composition is skewed to basic and acidic residues over residues 311 to 324 (APPH…DYGG), 346 to 358 (PIIK…EKQA), 384 to 393 (KVGDTGKSME), and 663 to 678 (PPEE…KSNS).

This sequence belongs to the CASC3 family. As to quaternary structure, identified in the spliceosome C complex. Component of the mRNA splicing-dependent exon junction complex (EJC), which contains at least casc3, eif4a3, magoh, nxf1 and rbm8a. Forms homooligomers.

It localises to the cytoplasm. Its subcellular location is the perinuclear region. It is found in the nucleus. The protein resides in the nucleus speckle. The protein localises to the stress granule. It localises to the cytoplasmic ribonucleoprotein granule. Its subcellular location is the cell projection. It is found in the dendrite. Functionally, required for pre-mRNA splicing as component of the spliceosome. Core component of the splicing-dependent multiprotein exon junction complex (EJC) deposited at splice junctions on mRNAs. The EJC is a dynamic structure consisting of core proteins and several peripheral nuclear and cytoplasmic associated factors that join the complex only transiently either during EJC assembly or during subsequent mRNA metabolism. The EJC marks the position of the exon-exon junction in the mature mRNA for the gene expression machinery and the core components remain bound to spliced mRNAs throughout all stages of mRNA metabolism thereby influencing downstream processes including nuclear mRNA export, subcellular mRNA localization, translation efficiency and nonsense-mediated mRNA decay (NMD). Binds spliced mRNA in sequence-independent manner, 20-24 nucleotides upstream of mRNA exon-exon junctions. This Xenopus tropicalis (Western clawed frog) protein is Protein CASC3 (casc3).